The following is a 133-amino-acid chain: Large ribosomal subunit protein bL20 (133 aa).

This sequence belongs to the bacterial ribosomal protein bL20 family.

Its function is as follows. Binds directly to 23S ribosomal RNA and is necessary for the in vitro assembly process of the 50S ribosomal subunit. It is not involved in the protein synthesizing functions of that subunit. The polypeptide is Large ribosomal subunit protein bL20 (Bartonella tribocorum (strain CIP 105476 / IBS 506)).